Reading from the N-terminus, the 107-residue chain is Small ribosomal subunit protein bS18c (107 aa).

Basic residues predominate over residues 85–95; that stretch reads KKAQRFKRRQS. A disordered region spans residues 85–107; that stretch reads KKAQRFKRRQSTARTVGLRTRNK.

Belongs to the bacterial ribosomal protein bS18 family. As to quaternary structure, part of the 30S ribosomal subunit.

It localises to the plastid. The protein localises to the chloroplast. The chain is Small ribosomal subunit protein bS18c from Oenothera argillicola (Appalachian evening primrose).